Reading from the N-terminus, the 306-residue chain is Porphobilinogen deaminase (306 aa).

C240 is subject to S-(dipyrrolylmethanemethyl)cysteine.

Belongs to the HMBS family. Monomer. It depends on dipyrromethane as a cofactor.

The enzyme catalyses 4 porphobilinogen + H2O = hydroxymethylbilane + 4 NH4(+). Its pathway is porphyrin-containing compound metabolism; protoporphyrin-IX biosynthesis; coproporphyrinogen-III from 5-aminolevulinate: step 2/4. In terms of biological role, tetrapolymerization of the monopyrrole PBG into the hydroxymethylbilane pre-uroporphyrinogen in several discrete steps. In Syntrophomonas wolfei subsp. wolfei (strain DSM 2245B / Goettingen), this protein is Porphobilinogen deaminase.